The sequence spans 140 residues: uncharacterized protein (140 aa).

Transmembrane regions (helical) follow at residues 42–62 (AFLFNFLPLLLLLAFLDIFAS), 65–85 (ASFLAAVLIKILVKSVFSALG), and 96–116 (RASDCLAALEFFDIFLAMLCF).

The protein localises to the membrane. This is an uncharacterized protein from Saccharomyces cerevisiae (strain ATCC 204508 / S288c) (Baker's yeast).